We begin with the raw amino-acid sequence, 399 residues long: [Pyruvate dehydrogenase (acetyl-transferring)] kinase, mitochondrial (399 aa).

The transit peptide at 1 to 18 directs the protein to the mitochondrion; it reads MFLTRRLLGPFTSAIARK. A Histidine kinase domain is found at 123–360; the sequence is VVETMAEGLI…DAMIFLKAIP (238 aa). ATP is bound by residues 247–254, Asp-286, 305–306, and 321–326; these read ELFKNSMR, ST, and GYGYGL.

This sequence belongs to the PDK/BCKDK protein kinase family.

It localises to the mitochondrion matrix. The enzyme catalyses L-seryl-[pyruvate dehydrogenase E1 alpha subunit] + ATP = O-phospho-L-seryl-[pyruvate dehydrogenase E1 alpha subunit] + ADP + H(+). Functionally, inhibits the mitochondrial pyruvate dehydrogenase complex by phosphorylation of the E1 alpha subunit, thus contributing to the regulation of glucose metabolism. This Ascaris suum (Pig roundworm) protein is [Pyruvate dehydrogenase (acetyl-transferring)] kinase, mitochondrial.